We begin with the raw amino-acid sequence, 329 residues long: Sex comb on midleg-like protein 1 (329 aa).

Residues Ser-138 and Ser-238 each carry the phosphoserine modification. The segment at 138–157 (SPTLPVSRRENNSPSNLPRP) is disordered. An SAM domain is found at 258–325 (WSVEAVVLFL…YYIDRLKQGK (68 aa)).

It belongs to the SCM family. Ubiquitous. Expressed in fetal and adult tissues.

The protein resides in the nucleus. Its function is as follows. Putative Polycomb group (PcG) protein. PcG proteins act by forming multiprotein complexes, which are required to maintain the transcriptionally repressive state of homeotic genes throughout development. May be involved in spermatogenesis during sexual maturation. The sequence is that of Sex comb on midleg-like protein 1 (SCML1) from Homo sapiens (Human).